A 411-amino-acid polypeptide reads, in one-letter code: Multidrug resistance protein MdtA (411 aa).

Positions 1 to 26 (MNNNKKTKKRFSLIIILLIVIAGAIA) are cleaved as a signal peptide. The span at 35-55 (SAPPVSKDTPTANTPNRSTAG) shows a compositional bias: polar residues. The tract at residues 35–64 (SAPPVSKDTPTANTPNRSTAGSRRPPMPPV) is disordered.

The protein belongs to the membrane fusion protein (MFP) (TC 8.A.1) family. As to quaternary structure, part of a tripartite efflux system composed of MdtA, MdtB and MdtC.

Its subcellular location is the cell inner membrane. This is Multidrug resistance protein MdtA from Proteus mirabilis (strain HI4320).